An 814-amino-acid polypeptide reads, in one-letter code: MELKILSVAIATTLTSTGVFALSEPVSQVTEQHAHSAHTHGVEFNRVEYQPTATLPIQPSKATRVQSLESLDESSTACDLEALVTESSNQLISEILSQGATCVNQLFSAESRIQESVFSSDHMYNIAKHTTTLAKGYTGGGSDELETLFLYLRAGYYAEFYNDNISFIEWVTPAVKESVDAFVNTASFYENSDRHGKVLSEVIITMDSAGLQHAYLPQVTQWLTRWNDQYAQHWYMRNAVNGVFTILFGGQWNEQFVQIIGNQTDLAKALGDFALRASSIGAEDEFMAANAGRELGRLTKYTGNASSVVKSQLSRIFEQYEMYGRGDAVWLAAADTASYYADCSEFGICNFETELKGLVLSQTYTCSPTIRILSQNMTQEQHAAACSKMGYEEGYFHQSLETGEQPVKDDHNTQLQVNIFDSSTDYGKYAGPIFDISTDNGGMYLEGDPSQPGNIPNFIAYEASYANADHFVWNLEHEYVHYLDGRFDLYGGFSHPTEKIVWWSEGIAEYVAQENDNQAALETILDGSTYTLSEIFETTYDGFDVDRIYRWGYLAVRFMFENHKDDVNQMLVETRQGNWINYKATITQWANLYQSEFEQWQQTLVSNGAPNAVITANSKGKVGESITFSSENSTDPNGKIVSVLWDFGDGSTSTQTKPTHQYGSEGEYSVSLSVTDSEGLTATATHTVVISALGGNDTLPQDCAVQSKVSGGRLTAGEPVCLANQQTIWLSVPAVNESSNLAITTGNGTGNLKLEYSNSGWPDDTNLHGWSDNIGNGECITLSNQSNYWGYVKVSGDFENAAIVVDFDAQKCRQ.

Positions 1–21 are cleaved as a signal peptide; the sequence is MELKILSVAIATTLTSTGVFA. A propeptide spanning residues 22 to 75 is cleaved from the precursor; that stretch reads LSEPVSQVTEQHAHSAHTHGVEFNRVEYQPTATLPIQPSKATRVQSLESLDESS. H477 serves as a coordination point for Zn(2+). The active site involves E478. H481 lines the Zn(2+) pocket. In terms of domain architecture, PKD spans 609 to 697; that stretch reads APNAVITANS…VVISALGGND (89 aa).

It belongs to the peptidase M9A family. Requires Zn(2+) as cofactor. Proteolytic cleavage might yield three different active forms.

Its subcellular location is the secreted. It catalyses the reaction Digestion of native collagen in the triple helical region at Xaa-|-Gly bonds. With synthetic peptides, a preference is shown for Gly at P3 and P1', Pro and Ala at P2 and P2', and hydroxyproline, Ala or Arg at P3'.. The sequence is that of Microbial collagenase from Vibrio alginolyticus.